Consider the following 206-residue polypeptide: Superoxide dismutase [Mn] (206 aa).

Positions 27, 82, 168, and 172 each coordinate Mn(2+).

Belongs to the iron/manganese superoxide dismutase family. Requires Mn(2+) as cofactor.

It catalyses the reaction 2 superoxide + 2 H(+) = H2O2 + O2. In terms of biological role, destroys superoxide anion radicals which are normally produced within the cells and which are toxic to biological systems. This is Superoxide dismutase [Mn] (sodA) from Lactococcus lactis subsp. lactis (strain IL1403) (Streptococcus lactis).